The sequence spans 292 residues: Mycothiol acetyltransferase (292 aa).

N-acetyltransferase domains are found at residues 13–168 and 159–292; these read ALDR…KWLQ and KSVA…VYEK. Glu-40 is a binding site for 1D-myo-inositol 2-(L-cysteinylamino)-2-deoxy-alpha-D-glucopyranoside. Residue 77 to 79 participates in acetyl-CoA binding; it reads LAV. Residues Glu-179, Lys-218, and Glu-226 each coordinate 1D-myo-inositol 2-(L-cysteinylamino)-2-deoxy-alpha-D-glucopyranoside. Acetyl-CoA-binding positions include 230 to 232 and 237 to 243; these read VGL and RGRGLGD. A 1D-myo-inositol 2-(L-cysteinylamino)-2-deoxy-alpha-D-glucopyranoside-binding site is contributed by Tyr-264.

It belongs to the acetyltransferase family. MshD subfamily. Monomer.

The enzyme catalyses 1D-myo-inositol 2-(L-cysteinylamino)-2-deoxy-alpha-D-glucopyranoside + acetyl-CoA = mycothiol + CoA + H(+). Its function is as follows. Catalyzes the transfer of acetyl from acetyl-CoA to desacetylmycothiol (Cys-GlcN-Ins) to form mycothiol. In Corynebacterium glutamicum (strain R), this protein is Mycothiol acetyltransferase.